A 308-amino-acid polypeptide reads, in one-letter code: B3 domain-containing protein REM23 (308 aa).

The TF-B3 1 DNA-binding region spans 19–114 (FFKVLKRSDM…SFTVKIFNKD (96 aa)). Residues 117-198 (EMMQPPQSRA…TERTQNSKRT (82 aa)) are disordered. Polar residues predominate over residues 121–133 (PPQSRASFASSSR). Positions 134–145 (VKTEQDVKREEE) are enriched in basic and acidic residues. The span at 149 to 166 (SSDSRSRGPTTAAETNRG) shows a compositional bias: polar residues. Basic residues predominate over residues 168 to 177 (SYKRKLNFGK). The segment covering 178-198 (KKAEETQTYKRTERTQNSKRT) has biased composition (basic and acidic residues). The segment at residues 216–308 (VAGFKIFISK…LELLLVVSKP (93 aa)) is a DNA-binding region (TF-B3 2).

The protein localises to the nucleus. In Arabidopsis thaliana (Mouse-ear cress), this protein is B3 domain-containing protein REM23 (REM23).